The sequence spans 129 residues: Glyoxalase domain-containing protein 5 homolog (129 aa).

The VOC domain occupies 5–128; that stretch reads RLDHLVLTVS…DYNLIEISNY (124 aa).

Belongs to the glyoxalase I family.

This is Glyoxalase domain-containing protein 5 homolog (glod5) from Dictyostelium discoideum (Social amoeba).